We begin with the raw amino-acid sequence, 275 residues long: HUWE1-associated protein modifying stress responses (275 aa).

The span at 32 to 44 shows a compositional bias: acidic residues; that stretch reads AEQDEQLSPELQE. Disordered regions lie at residues 32–51, 155–181, 204–228, and 250–275; these read AEQDEQLSPELQEEAAAAAQ, RNSRAPPRLTVVSPNRATSTETSSSVE, SVRSSTPGSPTHVSSGPNASRRRNG, and GTRKRTSAQCGDVITDSPTHKRNRML. Ser-167 is subject to Phosphoserine. Residues 172-181 show a composition bias toward low complexity; the sequence is TSTETSSSVE. Residues 204–221 are compositionally biased toward polar residues; sequence SVRSSTPGSPTHVSSGPN. Ser-212 carries the post-translational modification Phosphoserine.

The protein belongs to the HAPSTR1 family. Homooligomer. Heterooligomer with HAPSTR2; the interaction is direct and stabilizes HAPSTR1. Interacts with HUWE1. Post-translationally, ubiquitinated by HUWE1. Promotes HAPSTR1 degradation through polyubiquitination.

The protein localises to the nucleus. The protein resides in the cytoplasm. Acts as a central player within a network of stress response pathways promoting cellular adaptability. The E3 ligase HUWE1 assists HAPSTR1 in controlling stress signaling and in turn, HUWE1 feeds back to promote the degradation of HAPSTR1. HAPSTR1 represents a central coordination mechanism for stress response programs. Functions as a negative regulator of TP53/P53 in the cellular response to telomere erosion and probably also DNA damage. May attenuate p53/TP53 activation through the E3 ubiquitin ligase HUWE1. The sequence is that of HUWE1-associated protein modifying stress responses from Mus musculus (Mouse).